Reading from the N-terminus, the 397-residue chain is Lysophospholipid transporter LplT (397 aa).

The next 11 helical transmembrane spans lie at 21–41 (SAQFLSAFGDNALLFATLALL), 53–73 (ILQMVFVGAYILFAPFVGQVA), 91–111 (LGAASICFGFNPFIGYTLVGI), 139–159 (LMESSTIAAILLGSVAGGVLA), 164–184 (LAALGICAVVYAGAVVANLFI), 229–249 (WGAGVTLRFLLVLWVPTALGI), 257–277 (YLNAMVAVGIVVGAGAAAKLV), 281–301 (TVRRCMPAGILIGVGVLFFSL), 304–324 (ALLPAYGLLILIGILGGFFIV), 344–364 (IAVQNLGENTAMLLMLGLYSL), and 372–392 (VVGIGVGFGALFALAITGLWI).

Belongs to the major facilitator superfamily. LplT (TC 2.A.1.42) family.

The protein resides in the cell inner membrane. Functionally, catalyzes the facilitated diffusion of 2-acyl-glycero-3-phosphoethanolamine (2-acyl-GPE) into the cell. This Enterobacter sp. (strain 638) protein is Lysophospholipid transporter LplT.